Here is a 507-residue protein sequence, read N- to C-terminus: Putative pentatricopeptide repeat-containing protein At3g16710, mitochondrial (507 aa).

A mitochondrion-targeting transit peptide spans Met-1 to Phe-48. PPR repeat units lie at residues Ala-47–Pro-81, Ser-82–Pro-116, Leu-117–Pro-151, Asp-152–Pro-186, Asn-187–Pro-221, Asn-222–Pro-256, Asn-257–Pro-291, Asp-292–Pro-326, Asn-327–Ala-361, Asn-362–Pro-396, Asp-397–Ile-431, Asn-432–Pro-466, and Asn-467–Pro-501.

Belongs to the PPR family. P subfamily.

Its subcellular location is the mitochondrion. The sequence is that of Putative pentatricopeptide repeat-containing protein At3g16710, mitochondrial from Arabidopsis thaliana (Mouse-ear cress).